The sequence spans 293 residues: Large ribosomal subunit protein uL4c (293 aa).

The transit peptide at M1 to S50 directs the protein to the chloroplast. 2 disordered regions span residues E107 to G138 and Y259 to E293. The segment covering Y116–R126 has biased composition (basic residues). Residues T263 to E293 show a composition bias toward acidic residues.

This sequence belongs to the universal ribosomal protein uL4 family. In terms of assembly, component of the chloroplast large ribosomal subunit (LSU). Mature 70S chloroplast ribosomes of higher plants consist of a small (30S) and a large (50S) subunit. The 30S small subunit contains 1 molecule of ribosomal RNA (16S rRNA) and 24 different proteins. The 50S large subunit contains 3 rRNA molecules (23S, 5S and 4.5S rRNA) and 33 different proteins. In terms of tissue distribution, highly expressed in cotyledon and weakly in roots.

The protein resides in the plastid. It is found in the chloroplast. Its function is as follows. Component of the chloroplast ribosome (chloro-ribosome), a dedicated translation machinery responsible for the synthesis of chloroplast genome-encoded proteins, including proteins of the transcription and translation machinery and components of the photosynthetic apparatus. This chain is Large ribosomal subunit protein uL4c (RPL4), found in Spinacia oleracea (Spinach).